Reading from the N-terminus, the 866-residue chain is DNA replication licensing factor MCM4 (866 aa).

Disordered regions lie at residues 1 to 67 (MSSP…TSPA), 81 to 107 (SPLN…TPLR), and 124 to 145 (GGGS…PVSE). Composition is skewed to polar residues over residues 47-63 (DNIS…SLPA) and 81-93 (SPLN…SMGS). S55 and S81 each carry phosphoserine. T87 is subject to Phosphothreonine. The MCM domain maps to 460-669 (IYDRLARAIA…FDKRLASHLV (210 aa)). 512-519 (GDPGTSKS) is an ATP binding site. The Arginine finger motif lies at 644 to 647 (SRFD).

This sequence belongs to the MCM family. In terms of assembly, component of the Mcm2-7 complex. The complex forms a toroidal hexameric ring with the proposed subunit order Mcm2-Mcm6-Mcm4-Mcm7-Mcm3-Mcm5. Post-translationally, phosphorylated by the catalytic component of the Dbf4-dependent kinase (DDK) complex Cdc7.

Its subcellular location is the nucleus. The enzyme catalyses ATP + H2O = ADP + phosphate + H(+). In terms of biological role, acts as a component of the Mcm2-7 complex (Mcm complex) which is the putative replicative helicase essential for 'once per cell cycle' DNA replication initiation and elongation in eukaryotic cells. The active ATPase sites in the Mcm2-7 ring are formed through the interaction surfaces of two neighboring subunits such that a critical structure of a conserved arginine finger motif is provided in trans relative to the ATP-binding site of the Walker A box of the adjacent subunit. The six ATPase active sites, however, are likely to contribute differentially to the complex helicase activity. Required for DNA replication and cell proliferation. Essential role in mitotic DNA replication but not in endoreplication. This chain is DNA replication licensing factor MCM4 (dpa), found in Drosophila melanogaster (Fruit fly).